A 37-amino-acid chain; its full sequence is Cytochrome b6-f complex subunit 7 (37 aa).

Residues 5-25 (IFGTAFLFIVLVPVGLALGAF) form a helical membrane-spanning segment.

The protein belongs to the PetM family. In terms of assembly, the 4 large subunits of the cytochrome b6-f complex are cytochrome b6, subunit IV (17 kDa polypeptide, PetD), cytochrome f and the Rieske protein, while the 4 small subunits are PetG, PetL, PetM and PetN. The complex functions as a dimer.

It localises to the cellular thylakoid membrane. Functionally, component of the cytochrome b6-f complex, which mediates electron transfer between photosystem II (PSII) and photosystem I (PSI), cyclic electron flow around PSI, and state transitions. In Synechococcus elongatus (strain ATCC 33912 / PCC 7942 / FACHB-805) (Anacystis nidulans R2), this protein is Cytochrome b6-f complex subunit 7.